The following is a 288-amino-acid chain: Acetyl-coenzyme A carboxylase carboxyl transferase subunit beta (288 aa).

Positions 34 to 288 constitute a CoA carboxyltransferase N-terminal domain; sequence LFAKCPACKH…HLVAFHGGVS (255 aa). Zn(2+) is bound by residues C38, C41, C56, and C59. The C4-type zinc finger occupies 38 to 59; it reads CPACKHMIYQKDLGPAKICPTC.

It belongs to the AccD/PCCB family. As to quaternary structure, acetyl-CoA carboxylase is a heterohexamer composed of biotin carboxyl carrier protein (AccB), biotin carboxylase (AccC) and two subunits each of ACCase subunit alpha (AccA) and ACCase subunit beta (AccD). It depends on Zn(2+) as a cofactor.

It localises to the cytoplasm. The enzyme catalyses N(6)-carboxybiotinyl-L-lysyl-[protein] + acetyl-CoA = N(6)-biotinyl-L-lysyl-[protein] + malonyl-CoA. It functions in the pathway lipid metabolism; malonyl-CoA biosynthesis; malonyl-CoA from acetyl-CoA: step 1/1. Component of the acetyl coenzyme A carboxylase (ACC) complex. Biotin carboxylase (BC) catalyzes the carboxylation of biotin on its carrier protein (BCCP) and then the CO(2) group is transferred by the transcarboxylase to acetyl-CoA to form malonyl-CoA. The polypeptide is Acetyl-coenzyme A carboxylase carboxyl transferase subunit beta (Streptococcus equi subsp. zooepidemicus (strain MGCS10565)).